We begin with the raw amino-acid sequence, 319 residues long: Myoblast determination protein 1 (319 aa).

Residue methionine 1 forms a Peptide (Met-Gly) (interchain with G-Cter in ubiquitin) linkage. Residue lysine 104 is modified to N6-methyllysine; by EHMT2. The bHLH domain maps to 109 to 160; that stretch reads DRRKAATMRERRRLSKVNEAFETLKRCTSSNPNQRLPKVEILRNAIRYIEGL. Disordered regions lie at residues 174–221 and 266–319; these read AAAA…SGAR and APAL…YQVL. Composition is skewed to polar residues over residues 197–207 and 308–319; these read SDASSPRSNCS and ASANPNPIYQVL.

Efficient DNA binding requires dimerization with another bHLH protein. Seems to form active heterodimers with ITF-2. Interacts with SUV39H1. Interacts with DDX5. Interacts with CHD2. Interacts with TSC22D3. Interacts with SETD3. Interacts with P-TEFB complex; promotes the transcriptional activity of MYOD1 through its CDK9-mediated phosphorylation. Interacts with CSRP3. Interacts with NUPR1. In terms of processing, phosphorylated by CDK9. This phosphorylation promotes its function in muscle differentiation. Acetylated by a complex containing EP300 and PCAF. The acetylation is essential to activate target genes. Conversely, its deacetylation by SIRT1 inhibits its function. Post-translationally, ubiquitinated on the N-terminus; which is required for proteasomal degradation. In terms of processing, methylation at Lys-104 by EHMT2/G9a inhibits myogenic activity.

Its subcellular location is the nucleus. Its function is as follows. Acts as a transcriptional activator that promotes transcription of muscle-specific target genes and plays a role in muscle differentiation. Together with MYF5 and MYOG, co-occupies muscle-specific gene promoter core region during myogenesis. Induces fibroblasts to differentiate into myoblasts. Interacts with and is inhibited by the twist protein. This interaction probably involves the basic domains of both proteins. This chain is Myoblast determination protein 1 (MYOD1), found in Sus scrofa (Pig).